Consider the following 219-residue polypeptide: UPF0619 GPI-anchored membrane protein AFUA_3G00880 (219 aa).

The N-terminal stretch at 1-16 is a signal peptide; the sequence is MRFALTLTAFVGSVAA. An N-linked (GlcNAc...) asparagine glycan is attached at asparagine 85. 2 disordered regions span residues 107-144 and 160-205; these read SQQF…GTVS and SSTL…SLTV. A compositionally biased stretch (low complexity) spans 114 to 144; that stretch reads SSGSSTTSDSTSSASATGSASTSSSSTGTVS. A lipid anchor (GPI-like-anchor amidated asparagine) is attached at asparagine 198. Positions 199 to 219 are cleaved as a propeptide — removed in mature form; it reads GAGSLTVPAGSLLLGLVALAL.

The protein belongs to the UPF0619 family. In terms of processing, the GPI-like anchor contains a phosphoceramide lipid group. The anchor position has not been determined.

It localises to the cell membrane. In Aspergillus fumigatus (strain ATCC MYA-4609 / CBS 101355 / FGSC A1100 / Af293) (Neosartorya fumigata), this protein is UPF0619 GPI-anchored membrane protein AFUA_3G00880.